The following is a 151-amino-acid chain: MHIKIDDLTGRQVVSLVNEHLHSMTLMSPPESIHALGLEKLRGPEITFWSAWEGDELAGCGALKELDTRHGEIKSMRTSASHLRKGVAKQVLQHIIEEAEKRGYERLSLETGSMASFEPARKLYESFGFQYCEPFADYGEDPNSVFMTKKL.

Positions 3 to 151 (IKIDDLTGRQ…PNSVFMTKKL (149 aa)) constitute an N-acetyltransferase domain.

The protein belongs to the acetyltransferase family.

This is an uncharacterized protein from Bacillus subtilis (strain 168).